The chain runs to 712 residues: Lactoperoxidase (712 aa).

A signal peptide spans 1 to 22; the sequence is MWVCLQLPVFLASVTLFEVAAS. The propeptide occupies 23–100; that stretch reads DTIAQAASTT…WEESFKRLRR (78 aa). Asn106 is a glycosylation site (N-linked (GlcNAc...) (complex) asparagine; alternate). N-linked (GlcNAc...) (hybrid) asparagine; alternate glycosylation is present at Asn106. 4 disulfides stabilise this stretch: Cys123–Cys284, Cys132–Cys145, Cys246–Cys256, and Cys250–Cys274. An N-linked (GlcNAc...) (complex) asparagine; alternate glycan is attached at Asn212. A glycan (N-linked (GlcNAc...) (high mannose) asparagine; alternate) is linked at Asn212. Asp225 contributes to the heme b binding site. His226 serves as the catalytic Proton acceptor. Asp227 contributes to the Ca(2+) binding site. Ca(2+) is bound by residues Thr301, Phe303, Asp305, and Ser307. Phosphoserine is present on Ser315. N-linked (GlcNAc...) (high mannose) asparagine glycosylation occurs at Asn322. Cys354 and Cys365 form a disulfide bridge. An N-linked (GlcNAc...) asparagine glycan is attached at Asn358. Glu375 serves as a coordination point for heme b. A glycan (N-linked (GlcNAc...) (complex) asparagine; alternate) is linked at Asn449. N-linked (GlcNAc...) (hybrid) asparagine; alternate glycosylation occurs at Asn449. An N-linked (GlcNAc...) (high mannose) asparagine; alternate glycan is attached at Asn449. His468 provides a ligand contact to heme b. Position 482 is a 3'-nitrotyrosine (Tyr482). 2 disulfide bridges follow: Cys573–Cys630 and Cys671–Cys696.

It belongs to the peroxidase family. XPO subfamily. The cofactor is Ca(2+). Heme b is required as a cofactor. Mammary gland; milk.

It is found in the secreted. The protein localises to the cytoplasm. It carries out the reaction 2 a phenolic donor + H2O2 = 2 a phenolic radical donor + 2 H2O. The enzyme catalyses thiocyanate + H2O2 + H(+) = hypothiocyanous acid + H2O. It catalyses the reaction iodide + H2O2 = hypoiodite + H2O. Functionally, heme-containing oxidoreductase which catalyzes the conversion of thiocyanate (SCN(-)) into antimicrobial agent hypothiocyanous acid (OSCN(-)) in the presence of hydrogen peroxide (H2O2). Also involved in the conversion of iodide (I(-)) into hypoiodite (IO(-)) in the presence of H2O2. Responsible for the inactivation of a wide range of micro-organisms and hence, important component of defense mechanism. Shows antibacterial properties against E.coli, K.pneumoniae, P.aeruginosa, S.sonnei, S.saphrophyticus, S.epidermidis and S.dysenteriae. May protect the udder from infection and may promote growth in newborns. May be implicated in airway host defense against infection. May contribute to maintaining an appropriate H2O2 cellular level, therefore protecting cells from H2O2-caused injuries and inflammation. The polypeptide is Lactoperoxidase (Bubalus bubalis (Domestic water buffalo)).